A 227-amino-acid chain; its full sequence is 2-C-methyl-D-erythritol 4-phosphate cytidylyltransferase (227 aa).

This sequence belongs to the IspD/TarI cytidylyltransferase family. IspD subfamily.

It carries out the reaction 2-C-methyl-D-erythritol 4-phosphate + CTP + H(+) = 4-CDP-2-C-methyl-D-erythritol + diphosphate. The protein operates within isoprenoid biosynthesis; isopentenyl diphosphate biosynthesis via DXP pathway; isopentenyl diphosphate from 1-deoxy-D-xylulose 5-phosphate: step 2/6. Its function is as follows. Catalyzes the formation of 4-diphosphocytidyl-2-C-methyl-D-erythritol from CTP and 2-C-methyl-D-erythritol 4-phosphate (MEP). The protein is 2-C-methyl-D-erythritol 4-phosphate cytidylyltransferase of Dehalococcoides mccartyi (strain ATCC BAA-2266 / KCTC 15142 / 195) (Dehalococcoides ethenogenes (strain 195)).